A 242-amino-acid polypeptide reads, in one-letter code: Biosynthetic peptidoglycan transglycosylase (242 aa).

Residues 19–39 form a helical membrane-spanning segment; it reads LMVVLAVFWGGGIALFSVAPV.

Belongs to the glycosyltransferase 51 family.

It is found in the cell inner membrane. It carries out the reaction [GlcNAc-(1-&gt;4)-Mur2Ac(oyl-L-Ala-gamma-D-Glu-L-Lys-D-Ala-D-Ala)](n)-di-trans,octa-cis-undecaprenyl diphosphate + beta-D-GlcNAc-(1-&gt;4)-Mur2Ac(oyl-L-Ala-gamma-D-Glu-L-Lys-D-Ala-D-Ala)-di-trans,octa-cis-undecaprenyl diphosphate = [GlcNAc-(1-&gt;4)-Mur2Ac(oyl-L-Ala-gamma-D-Glu-L-Lys-D-Ala-D-Ala)](n+1)-di-trans,octa-cis-undecaprenyl diphosphate + di-trans,octa-cis-undecaprenyl diphosphate + H(+). Its pathway is cell wall biogenesis; peptidoglycan biosynthesis. Peptidoglycan polymerase that catalyzes glycan chain elongation from lipid-linked precursors. The polypeptide is Biosynthetic peptidoglycan transglycosylase (Escherichia coli (strain SMS-3-5 / SECEC)).